The following is a 74-amino-acid chain: Translation initiation factor IF-1 (74 aa).

Positions 1 to 72 (MSKQDLIEME…TKGRITYRLR (72 aa)) constitute an S1-like domain.

Belongs to the IF-1 family. In terms of assembly, component of the 30S ribosomal translation pre-initiation complex which assembles on the 30S ribosome in the order IF-2 and IF-3, IF-1 and N-formylmethionyl-tRNA(fMet); mRNA recruitment can occur at any time during PIC assembly.

The protein resides in the cytoplasm. One of the essential components for the initiation of protein synthesis. Stabilizes the binding of IF-2 and IF-3 on the 30S subunit to which N-formylmethionyl-tRNA(fMet) subsequently binds. Helps modulate mRNA selection, yielding the 30S pre-initiation complex (PIC). Upon addition of the 50S ribosomal subunit IF-1, IF-2 and IF-3 are released leaving the mature 70S translation initiation complex. In Trichodesmium erythraeum (strain IMS101), this protein is Translation initiation factor IF-1.